The chain runs to 358 residues: DNA integrity scanning protein DisA (358 aa).

In terms of domain architecture, DAC spans Arg-6 to Ser-144. Residues Gly-73, Leu-91, and Thr-104 to Ser-108 each bind ATP.

It belongs to the DisA family. In terms of assembly, homooctamer. Requires Mg(2+) as cofactor.

The catalysed reaction is 2 ATP = 3',3'-c-di-AMP + 2 diphosphate. Functionally, participates in a DNA-damage check-point. DisA forms globular foci that rapidly scan along the chromosomes searching for lesions. Also has diadenylate cyclase activity, catalyzing the condensation of 2 ATP molecules into cyclic di-AMP (c-di-AMP). c-di-AMP likely acts as a signaling molecule that may couple DNA integrity with a cellular process. The polypeptide is DNA integrity scanning protein DisA (Mycobacterium bovis (strain ATCC BAA-935 / AF2122/97)).